Here is a 147-residue protein sequence, read N- to C-terminus: uncharacterized protein (147 aa).

Residues 71–91 (IDILAFVAGTVGVGSLVLLQF) traverse the membrane as a helical segment.

It localises to the virion. The protein localises to the host membrane. This is an uncharacterized protein from Acanthamoeba polyphaga mimivirus (APMV).